A 198-amino-acid chain; its full sequence is Ribonuclease HII (198 aa).

In terms of domain architecture, RNase H type-2 spans asparagine 11–valine 198. 3 residues coordinate a divalent metal cation: aspartate 17, glutamate 18, and aspartate 109.

Belongs to the RNase HII family. Mn(2+) serves as cofactor. Requires Mg(2+) as cofactor.

It localises to the cytoplasm. The catalysed reaction is Endonucleolytic cleavage to 5'-phosphomonoester.. Endonuclease that specifically degrades the RNA of RNA-DNA hybrids. This Yersinia pseudotuberculosis serotype O:1b (strain IP 31758) protein is Ribonuclease HII.